Reading from the N-terminus, the 527-residue chain is Protein PyrBI (527 aa).

The segment at Met1–Phe342 is aspartate carbamoyltransferase. Residues Asp343–Ile357 form a linker region. The interval Val368–Ile527 is aspartate carbamoyltransferase regulatory region. Positions 483, 488, 512, and 515 each coordinate Zn(2+).

The protein in the N-terminal section; belongs to the aspartate/ornithine carbamoyltransferase superfamily. ATCase family. This sequence in the C-terminal section; belongs to the PyrI family.

It catalyses the reaction carbamoyl phosphate + L-aspartate = N-carbamoyl-L-aspartate + phosphate + H(+). Its pathway is pyrimidine metabolism; UMP biosynthesis via de novo pathway; (S)-dihydroorotate from bicarbonate: step 2/3. This chain is Protein PyrBI (pyrBI), found in Thermotoga maritima (strain ATCC 43589 / DSM 3109 / JCM 10099 / NBRC 100826 / MSB8).